Here is a 285-residue protein sequence, read N- to C-terminus: ATP synthase gamma chain (285 aa).

The protein belongs to the ATPase gamma chain family. In terms of assembly, F-type ATPases have 2 components, CF(1) - the catalytic core - and CF(0) - the membrane proton channel. CF(1) has five subunits: alpha(3), beta(3), gamma(1), delta(1), epsilon(1). CF(0) has three main subunits: a, b and c.

It localises to the cell membrane. In terms of biological role, produces ATP from ADP in the presence of a proton gradient across the membrane. The gamma chain is believed to be important in regulating ATPase activity and the flow of protons through the CF(0) complex. The polypeptide is ATP synthase gamma chain (Dehalococcoides mccartyi (strain CBDB1)).